Here is a 704-residue protein sequence, read N- to C-terminus: Lebercilin (704 aa).

Positions 1–14 (MGERARSPDIEQGK) are enriched in basic and acidic residues. A disordered region spans residues 1 to 80 (MGERARSPDI…VSPKAVPSKK (80 aa)). Phosphoserine is present on S7. Over residues 25–40 (SSDLGSSPQSSGPSSP) the composition is skewed to low complexity. S48 is subject to Phosphoserine. Residues 49–63 (TREKNPKRHLSDNQV) show a composition bias toward basic and acidic residues. Positions 105 to 300 (KRVLSARLLK…KEKELDIKNI (196 aa)) form a coiled coil. Disordered regions lie at residues 389–417 (QEGKYDEDEDPCSAKQEARKPESEWAREE) and 476–661 (ELQD…GDEE). Positions 404–417 (QEARKPESEWAREE) are enriched in basic and acidic residues. Positions 448–479 (AQSVDKFEDEAERLKTEMLLAKLNEINKELQD) form a coiled coil. Positions 496 to 505 (SKLHSPDRST) are enriched in basic and acidic residues. The span at 570–591 (GKSNPPSQKSSLLDFQSNSSES) shows a compositional bias: polar residues. The span at 592 to 608 (PSKDSLDLMSRKEKKAT) shows a compositional bias: basic and acidic residues. The segment covering 617–627 (SASNTSVSSKS) has biased composition (low complexity).

This sequence belongs to the LCA5 family. Interacts with NINL. Interacts with OFD1. Interacts with FAM161A. Interacts with components of the IFT complex B. Detected in several tissues.

Its subcellular location is the cytoplasm. The protein localises to the cytoskeleton. It localises to the cilium axoneme. It is found in the cilium basal body. The protein resides in the cell projection. Its subcellular location is the cilium. Functionally, involved in intraflagellar protein (IFT) transport in photoreceptor cilia. The polypeptide is Lebercilin (Lca5) (Mus musculus (Mouse)).